We begin with the raw amino-acid sequence, 122 residues long: Large ribosomal subunit protein uL18 (122 aa).

The protein belongs to the universal ribosomal protein uL18 family. In terms of assembly, part of the 50S ribosomal subunit; part of the 5S rRNA/L5/L18/L25 subcomplex. Contacts the 5S and 23S rRNAs.

In terms of biological role, this is one of the proteins that bind and probably mediate the attachment of the 5S RNA into the large ribosomal subunit, where it forms part of the central protuberance. The protein is Large ribosomal subunit protein uL18 of Acetivibrio thermocellus (strain ATCC 27405 / DSM 1237 / JCM 9322 / NBRC 103400 / NCIMB 10682 / NRRL B-4536 / VPI 7372) (Clostridium thermocellum).